The sequence spans 122 residues: Small ribosomal subunit protein uS13 (122 aa).

Positions 99-122 (RGQRTHTNARTRKGPAKAIAGKKK) are disordered.

Belongs to the universal ribosomal protein uS13 family. In terms of assembly, part of the 30S ribosomal subunit. Forms a loose heterodimer with protein S19. Forms two bridges to the 50S subunit in the 70S ribosome.

Located at the top of the head of the 30S subunit, it contacts several helices of the 16S rRNA. In the 70S ribosome it contacts the 23S rRNA (bridge B1a) and protein L5 of the 50S subunit (bridge B1b), connecting the 2 subunits; these bridges are implicated in subunit movement. Contacts the tRNAs in the A and P-sites. The chain is Small ribosomal subunit protein uS13 from Rhizobium etli (strain CIAT 652).